Reading from the N-terminus, the 729-residue chain is Fatty acid oxidation complex subunit alpha (729 aa).

Positions 1 to 189 are enoyl-CoA hydratase/isomerase; sequence MLYKGDTLYL…KIGLVDGVVK (189 aa). D296 serves as a coordination point for substrate. The interval 311–729 is 3-hydroxyacyl-CoA dehydrogenase; it reads ETPKQAAVLG…ARPVGDLKTA (419 aa). Residues M324, D343, 400-402, K407, and S429 contribute to the NAD(+) site; that span reads VVE. Catalysis depends on H450, which acts as the For 3-hydroxyacyl-CoA dehydrogenase activity. N453 contributes to the NAD(+) binding site. 2 residues coordinate substrate: N500 and Y660. The interval 708 to 729 is disordered; the sequence is RHNEPYYPPVEPARPVGDLKTA.

In the N-terminal section; belongs to the enoyl-CoA hydratase/isomerase family. This sequence in the C-terminal section; belongs to the 3-hydroxyacyl-CoA dehydrogenase family. Heterotetramer of two alpha chains (FadB) and two beta chains (FadA).

It carries out the reaction a (3S)-3-hydroxyacyl-CoA + NAD(+) = a 3-oxoacyl-CoA + NADH + H(+). It catalyses the reaction a (3S)-3-hydroxyacyl-CoA = a (2E)-enoyl-CoA + H2O. The catalysed reaction is a 4-saturated-(3S)-3-hydroxyacyl-CoA = a (3E)-enoyl-CoA + H2O. The enzyme catalyses (3S)-3-hydroxybutanoyl-CoA = (3R)-3-hydroxybutanoyl-CoA. It carries out the reaction a (3Z)-enoyl-CoA = a 4-saturated (2E)-enoyl-CoA. It catalyses the reaction a (3E)-enoyl-CoA = a 4-saturated (2E)-enoyl-CoA. The protein operates within lipid metabolism; fatty acid beta-oxidation. Functionally, involved in the aerobic and anaerobic degradation of long-chain fatty acids via beta-oxidation cycle. Catalyzes the formation of 3-oxoacyl-CoA from enoyl-CoA via L-3-hydroxyacyl-CoA. It can also use D-3-hydroxyacyl-CoA and cis-3-enoyl-CoA as substrate. The chain is Fatty acid oxidation complex subunit alpha from Escherichia coli O81 (strain ED1a).